An 851-amino-acid chain; its full sequence is Alanine--tRNA ligase (851 aa).

Histidine 535, histidine 539, cysteine 637, and histidine 641 together coordinate Zn(2+).

The protein belongs to the class-II aminoacyl-tRNA synthetase family. The cofactor is Zn(2+).

The protein resides in the cytoplasm. It carries out the reaction tRNA(Ala) + L-alanine + ATP = L-alanyl-tRNA(Ala) + AMP + diphosphate. In terms of biological role, catalyzes the attachment of alanine to tRNA(Ala) in a two-step reaction: alanine is first activated by ATP to form Ala-AMP and then transferred to the acceptor end of tRNA(Ala). Also edits incorrectly charged Ser-tRNA(Ala) and Gly-tRNA(Ala) via its editing domain. The chain is Alanine--tRNA ligase from Acholeplasma laidlawii (strain PG-8A).